A 412-amino-acid chain; its full sequence is MMSAASTNPEFPIATSGTKDIVLAFSGGLDTSFCIPYLQERGYAVHTVFADTGGVDAEEREFIEKRAAELGAASHVTVDGGPAIWEGFVKPFVWAGEGYQGQYPLLVSDRYLIVDAALKRAEELGTRIIAHGCTGMGNDQVRFDLAVKALGDYQIVAPIREIQKEHTQTRAYEQKYLEARGFGVRAKQQAYTINENLLGLTMSGGEIDRWEAPGEGARGWCAPRSAWPSEALTVTLKFVEGEAVELDGKPLPGAKILAKLNTLFAQYGVGRGVYTGDTVIGLKGRIVFEAPGLISLLTAHRALEDAVLTKQQNRFKPDVARKWVELVYEGFYHDPLKSDIEAFLKSSQAKVNGEVTLETRGGRVDAVAVRSPHLLNTKGATYAQSADWGVEEAEGFIKLFGMSSTLYAQVNR.

Residues 24-32 (AFSGGLDTS) and alanine 50 contribute to the ATP site. Positions 103 and 108 each coordinate L-citrulline. An ATP-binding site is contributed by glycine 132. Threonine 134, asparagine 138, and aspartate 139 together coordinate L-aspartate. Residue asparagine 138 participates in L-citrulline binding. Residue arginine 142 coordinates L-citrulline.

Belongs to the argininosuccinate synthase family. Type 1 subfamily. In terms of assembly, homotetramer.

The protein resides in the cytoplasm. The catalysed reaction is L-citrulline + L-aspartate + ATP = 2-(N(omega)-L-arginino)succinate + AMP + diphosphate + H(+). The protein operates within amino-acid biosynthesis; L-arginine biosynthesis; L-arginine from L-ornithine and carbamoyl phosphate: step 2/3. The protein is Argininosuccinate synthase of Xanthomonas axonopodis pv. citri (strain 306).